A 183-amino-acid polypeptide reads, in one-letter code: NADH-quinone oxidoreductase subunit A (183 aa).

Helical transmembrane passes span 11–31 (IIAFVIGVTFLCVFMLTVPLL), 63–83 (FYLVAIFFVVFDLEALYLYAW), and 98–118 (MVIFVVDLLIALIYVFATGAL). A disordered region spans residues 160-183 (GHIPAQSSGRMKSKTSTAPSSKQE). Polar residues predominate over residues 164–183 (AQSSGRMKSKTSTAPSSKQE).

Belongs to the complex I subunit 3 family. NDH-1 is composed of 14 different subunits. Subunits NuoA, H, J, K, L, M, N constitute the membrane sector of the complex.

It is found in the cell inner membrane. It carries out the reaction a quinone + NADH + 5 H(+)(in) = a quinol + NAD(+) + 4 H(+)(out). Functionally, NDH-1 shuttles electrons from NADH, via FMN and iron-sulfur (Fe-S) centers, to quinones in the respiratory chain. The immediate electron acceptor for the enzyme in this species is believed to be ubiquinone. Couples the redox reaction to proton translocation (for every two electrons transferred, four hydrogen ions are translocated across the cytoplasmic membrane), and thus conserves the redox energy in a proton gradient. This Acinetobacter baylyi (strain ATCC 33305 / BD413 / ADP1) protein is NADH-quinone oxidoreductase subunit A.